Reading from the N-terminus, the 246-residue chain is Pyrroloquinoline-quinone synthase (246 aa).

Belongs to the PqqC family.

The enzyme catalyses 6-(2-amino-2-carboxyethyl)-7,8-dioxo-1,2,3,4,7,8-hexahydroquinoline-2,4-dicarboxylate + 3 O2 = pyrroloquinoline quinone + 2 H2O2 + 2 H2O + H(+). The protein operates within cofactor biosynthesis; pyrroloquinoline quinone biosynthesis. In terms of biological role, ring cyclization and eight-electron oxidation of 3a-(2-amino-2-carboxyethyl)-4,5-dioxo-4,5,6,7,8,9-hexahydroquinoline-7,9-dicarboxylic-acid to PQQ. The polypeptide is Pyrroloquinoline-quinone synthase (Acidiphilium cryptum (strain JF-5)).